Consider the following 149-residue polypeptide: Pleckstrin homology domain-containing family J member 1 (149 aa).

Residues 15-108 form the PH domain; that stretch reads PAEKAAEILM…WIEALKRASY (94 aa).

This chain is Pleckstrin homology domain-containing family J member 1 (PLEKHJ1), found in Gallus gallus (Chicken).